A 206-amino-acid polypeptide reads, in one-letter code: N-(5'-phosphoribosyl)anthranilate isomerase (206 aa).

This sequence belongs to the TrpF family.

The enzyme catalyses N-(5-phospho-beta-D-ribosyl)anthranilate = 1-(2-carboxyphenylamino)-1-deoxy-D-ribulose 5-phosphate. The protein operates within amino-acid biosynthesis; L-tryptophan biosynthesis; L-tryptophan from chorismate: step 3/5. The chain is N-(5'-phosphoribosyl)anthranilate isomerase from Chlamydia felis (strain Fe/C-56) (Chlamydophila felis).